A 268-amino-acid chain; its full sequence is UPF0328 protein ECU10_1850 (268 aa).

Belongs to the UPF0328 family.

The protein is UPF0328 protein ECU10_1850 of Encephalitozoon cuniculi (strain GB-M1) (Microsporidian parasite).